The following is a 265-amino-acid chain: Small ribosomal subunit protein uS2 (265 aa).

The protein belongs to the universal ribosomal protein uS2 family.

The chain is Small ribosomal subunit protein uS2 from Gluconobacter oxydans (strain 621H) (Gluconobacter suboxydans).